Consider the following 235-residue polypeptide: Elongation factor Tu (235 aa).

The tr-type G domain occupies 1 to 125 (KNMITGATQM…DGDKYIPTPS (125 aa)). 47–50 (NKQD) serves as a coordination point for GTP.

Belongs to the TRAFAC class translation factor GTPase superfamily. Classic translation factor GTPase family. EF-Tu/EF-1A subfamily. Monomer.

It localises to the cytoplasm. The catalysed reaction is GTP + H2O = GDP + phosphate + H(+). Functionally, GTP hydrolase that promotes the GTP-dependent binding of aminoacyl-tRNA to the A-site of ribosomes during protein biosynthesis. This is Elongation factor Tu (tufA) from Leptolyngbya boryana (Plectonema boryanum).